The sequence spans 469 residues: Glutamate--tRNA ligase (469 aa).

Residues 9-19 (PSPTGFLHVGG) carry the 'HIGH' region motif. The 'KMSKS' region signature appears at 236 to 240 (KLSKR). Residue Lys239 coordinates ATP.

Belongs to the class-I aminoacyl-tRNA synthetase family. Glutamate--tRNA ligase type 1 subfamily. As to quaternary structure, monomer.

Its subcellular location is the cytoplasm. It carries out the reaction tRNA(Glu) + L-glutamate + ATP = L-glutamyl-tRNA(Glu) + AMP + diphosphate. Its function is as follows. Catalyzes the attachment of glutamate to tRNA(Glu) in a two-step reaction: glutamate is first activated by ATP to form Glu-AMP and then transferred to the acceptor end of tRNA(Glu). In Shewanella frigidimarina (strain NCIMB 400), this protein is Glutamate--tRNA ligase.